The following is a 152-amino-acid chain: Protein-export protein SecB (152 aa).

It belongs to the SecB family. Homotetramer, a dimer of dimers. One homotetramer interacts with 1 SecA dimer.

The protein localises to the cytoplasm. Its function is as follows. One of the proteins required for the normal export of preproteins out of the cell cytoplasm. It is a molecular chaperone that binds to a subset of precursor proteins, maintaining them in a translocation-competent state. It also specifically binds to its receptor SecA. This is Protein-export protein SecB from Rickettsia rickettsii (strain Iowa).